A 1248-amino-acid polypeptide reads, in one-letter code: von Willebrand factor A domain-containing protein 5B2 (1248 aa).

The 138-residue stretch at 1–138 (MPGLYCPTSW…TMTVTLCSSR (138 aa)) folds into the VIT domain. The tract at residues 184–204 (VGSPEEERPTWEQPTATPDVF) is disordered. The 174-residue stretch at 354–527 (ELLFLLDGSG…KALEPALSDI (174 aa)) folds into the VWFA domain. 5 disordered regions span residues 590-650 (PEEV…SSDT), 672-710 (SASP…QQGC), 751-789 (ALAG…EPGQ), 1008-1037 (SKSA…RLSL), and 1126-1168 (DSAT…SSDL). Positions 595-619 (SATSPGTEPTHTTEPLGTGTVSAEL) are enriched in polar residues. 3 stretches are compositionally biased toward low complexity: residues 684–701 (SSES…GSRP), 751–764 (ALAG…SGRA), and 780–789 (PDGLGPEPGQ). Positions 1127–1145 (SATASCSQSPSSGSEGPGQ) are enriched in low complexity. Residues 1159 to 1168 (GMERQDSSDL) are compositionally biased toward basic and acidic residues.

The protein is von Willebrand factor A domain-containing protein 5B2 (Vwa5b2) of Mus musculus (Mouse).